The sequence spans 333 residues: Terpene synthase 2 (333 aa).

Residues 82–87 (DDDLDT) carry the DDxx(x)D/E motif motif. An NDxxSxxxD/E motif motif is present at residues 219-227 (NDCVSYAKE).

Belongs to the terpene synthase family.

It carries out the reaction (2E,6E)-farnesyl diphosphate = (E)-beta-farnesene + diphosphate. It catalyses the reaction (2E,6E)-farnesyl diphosphate = (1S,2S,4R)-beta-elemene + diphosphate. Terpene synthase that converts its substrate farnesyl diphosphate (FPP) into the sesquiterpene (E)-beta-farnesene as major product. Is also able to convert FPP into delta-elemene, beta-elemene, (E)-beta-caryophyllene, 9-epi-(E)-caryophyllene, and a yet unidentified sesquiterpene. The protein is Terpene synthase 2 of Dictyostelium purpureum (Slime mold).